The following is a 1521-amino-acid chain: MENNNGNSVINKSNDKNSNNPNYMLLDRIFRLQKHNLSILLSNNNNNNNNNNNNNSNITIQSATNYLNELLNCLNELLTKFQSKTFQSPPQPINTSSTQTNYNNQNNPNPNPNPSPNPNSNNNNNNNTHITIILSTEIIIKILVKFCSVLPMDINYHKISVYGSPINLSLIQLPLKLAQLIVLISRYQNSITFNDHPNELEQLVNYFLYIIKPEKQIASSPSTPSTPSSSSRSQQQQQQQQQQSSSSSLSSSSSFHNVNTNLRIESLKALSSLLHNNGPNITSKLQQPLIECLIELSNYSDQSIDQETKRIAIVSLGNLCMQCGTKLSKYYIQIYDRLSLNLERVTSHINSDKYLIKFTSSILRSMQLLITQAKGILDQKSKSLYNILKTLMFYGVNISSSMSSVLTYQYQFEYSSRKKKQLQQQLANNNVLNSNSNSSSGGASSSSGGSNNTSPAIVTSASIHNSNGNSNENEIEKSTGITSSDSDIDERYNLSKLRFLTITLLNTMAKHSPKVFFGYWTLFLPSTPFPLTPTVFTSMTNDPDIKIKIVAANFLQTIIDGSKDYLVAINTSNHHNHHHSHSKSITTASPIMSRLNLNDNNNNNINNLNSNSFTTFSQNLTSILKEIHNGLIMILVQDPNYILPAFHQQILRCVSTLIINCPYEKLNMPSLLTSLLSAISPYIQNRDHSIQLTSLICIKQLFDITPLSPKELTPVLNNNNFIKIILNFLNNNNNNNNNNNNNNNNNNNNNNNNNNNNNNNILSNTLTSSLINEPNQQHQHQQHQQQNQQHHHQHQQQSLHFNQIEYVKIECLQIIGALTKHNFTILLEYIDLVYNILISILKKEISIHNSSGIVNSQQQQQQQQQQQQQQQQQQQQQQQQQQQQQQQQQQQQQQHNNTQNINNISGLNESSIGNYCLKTFEEITKAIQDSHKNNNTDIDYKICEKEFWNLFFLILPSLTVDPYPQIRASICNIFSNIGSKQFESMTKNLQMHLVSVVLGLIFDEQHIVRASACRSVGILIKIDSLHDDANFLSNSASCLTKSMGDVNINVRIKACWSLANLCDHLVSLKSKQELLFNDIPRQILSKVLESLLNSSFDNPKIRSNVVRALGNFARFADKKVLYNLNETSTFCKINENNNQNYNNQNISDYFHSIGGFNNLMNGVGGGGGSSSSGGGNGSGTIIPTTEEEEEKEEINIENKQKQSLPPQFSNSITLKKDSIILDRIVDSLLKNAQEPSSSFNFVKVKWNACYALGNIFYNQDIEFPNDDNNNNNNNNNKWLPQVYSTLITLMKSCKNFKTRINATSSLATPTHSRRKYGPFYKDVFEAVLESLSNINTVSDTSEFQYRDNLEKQLEIALIHLISEMKSNEIKSFDNCFFQYTDIIVNSFQKHQIILPIPQQPLPTSKTSSSSSSTSSEATPYLSSSVPPSIVTSTPSTTPMISSSNPNTSSLPTSERPTIKEYQKALEIIKEFCQNHNNIDTMDDTQKLHLSQLCLLFDFSESNYQDMYSKLQEVHSTGKSSH.

5 disordered regions span residues 1–20, 85–124, 218–254, 431–482, and 735–797; these read MENN…NSNN, TFQS…NNNN, ASSP…SSSS, VLNS…TGIT, and NNNN…HQQQ. Composition is skewed to low complexity over residues 94–108, 219–254, and 431–454; these read NTSS…QNNP, SSPS…SSSS, and VLNS…NNTS. Over residues 455-464 the composition is skewed to polar residues; sequence PAIVTSASIH. Composition is skewed to low complexity over residues 465-482 and 735-762; these read NSNG…TGIT and NNNN…NNIL. Residues 763–774 show a composition bias toward polar residues; sequence SNTLTSSLINEP. Residues 775-788 show a composition bias toward low complexity; that stretch reads NQQHQHQQHQQQNQ. Residues 853–903 adopt a coiled-coil conformation; it reads IVNSQQQQQQQQQQQQQQQQQQQQQQQQQQQQQQQQQQQQQQHNNTQNINN. Low complexity predominate over residues 1398 to 1453; that stretch reads QQPLPTSKTSSSSSSTSSEATPYLSSSVPPSIVTSTPSTTPMISSSNPNTSSLPTS. The tract at residues 1398-1455 is disordered; the sequence is QQPLPTSKTSSSSSSTSSEATPYLSSSVPPSIVTSTPSTTPMISSSNPNTSSLPTSER.

This is an uncharacterized protein from Dictyostelium discoideum (Social amoeba).